A 151-amino-acid chain; its full sequence is MRRLLLVTSLVVVLLWEAGAVPAPKVPIKMQVKHWPSEQDPEKAWGARVVEPPEKDDQLVVLFPVQKPKLLTTEEKPRGQGRGPILPGTKAWMETEDTLGHVLSPEPDHDSLYHPPPEEDQGEERPRLWVMPNHQVLLGPEEDQDHIYHPQ.

The N-terminal stretch at 1 to 20 is a signal peptide; the sequence is MRRLLLVTSLVVVLLWEAGA. The segment at 71 to 151 is disordered; the sequence is LTTEEKPRGQ…EDQDHIYHPQ (81 aa).

Interacts with isoform 1 and isoform 3 of MAD1L1. Interacts with MTTP. Highly expressed in the intestinal epithelial cells (at protein level). Abundantly expressed in the epithelial cells of the liver, kidney and cervix. Significantly down-regulated in hepatocellular carcinoma and right colon adenocarcinoma compared with the respective adjacent normal tissues. Expressed in epididymis (at protein level).

The protein resides in the secreted. It localises to the endoplasmic reticulum. In terms of biological role, lipid-binding protein which promotes lipid absorption by facilitating MTTP-mediated lipid transfer (mainly triglycerides and phospholipids) and MTTP-mediated apoB lipoprotein assembly and secretion. Protects the gastrointestinal epithelium from irradiation-induced apoptosis. May play an important role in maintaining normal growth homeostasis in epithelial cells. Involved in p53/TP53-dependent cell survival after DNA damage. May down-regulate the expression of MAD1L1 and exert a suppressive role in mitotic spindle assembly checkpoint in hepatocellular carcinomas. In Homo sapiens (Human), this protein is Proline-rich acidic protein 1 (PRAP1).